The sequence spans 264 residues: Vitellin-degrading protease (264 aa).

The signal sequence occupies residues 1–15; sequence MTNSLLICFTILGLA. Residues 16–27 constitute a propeptide, activation peptide; that stretch reads ASSPTKPIGDIR. The 226-residue stretch at 28-253 folds into the Peptidase S1 domain; that stretch reads IVGGEDIVIT…LREWVDENIT (226 aa). C53 and C69 form a disulfide bridge. Residues H68 and D113 each act as charge relay system in the active site. Residues C178 and C194 are joined by a disulfide bond. D203 provides a ligand contact to substrate. C205 and C229 are disulfide-bonded. The active-site Charge relay system is S209. N-linked (GlcNAc...) asparagine glycosylation occurs at N251.

It belongs to the peptidase S1 family. In terms of processing, cleavage after Arg-27 leads to beta-VTN protease and subsequent cleavage after Arg-89 leads to alpha-VTN.

Functionally, responsible for the degradation of vitellin in eggs at the head pigmentation stage. In Bombyx mori (Silk moth), this protein is Vitellin-degrading protease.